The primary structure comprises 176 residues: Large ribosomal subunit protein uL10 (176 aa).

Belongs to the universal ribosomal protein uL10 family. Part of the ribosomal stalk of the 50S ribosomal subunit. The N-terminus interacts with L11 and the large rRNA to form the base of the stalk. The C-terminus forms an elongated spine to which L12 dimers bind in a sequential fashion forming a multimeric L10(L12)X complex.

Functionally, forms part of the ribosomal stalk, playing a central role in the interaction of the ribosome with GTP-bound translation factors. The chain is Large ribosomal subunit protein uL10 from Mycobacteroides abscessus (strain ATCC 19977 / DSM 44196 / CCUG 20993 / CIP 104536 / JCM 13569 / NCTC 13031 / TMC 1543 / L948) (Mycobacterium abscessus).